Consider the following 245-residue polypeptide: Adapter protein MecA (245 aa).

This sequence belongs to the MecA family. Homodimer.

Functionally, enables the recognition and targeting of unfolded and aggregated proteins to the ClpC protease or to other proteins involved in proteolysis. The polypeptide is Adapter protein MecA (Streptococcus pneumoniae serotype 4 (strain ATCC BAA-334 / TIGR4)).